A 767-amino-acid polypeptide reads, in one-letter code: AMP deaminase 3 (767 aa).

A phosphoserine mark is found at serine 85 and serine 107. Disordered stretches follow at residues glutamine 89–proline 111 and leucine 181–glutamine 205. Zn(2+)-binding residues include histidine 317 and histidine 319. Residues histidine 319 and lysine 388 to tyrosine 393 each bind substrate. Histidine 586 is a binding site for Zn(2+). Glutamate 589 provides a ligand contact to substrate. Residue histidine 608 is the Proton acceptor of the active site. Aspartate 663 lines the Zn(2+) pocket. Aspartate 664–glutamine 667 is a substrate binding site.

This sequence belongs to the metallo-dependent hydrolases superfamily. Adenosine and AMP deaminases family. As to quaternary structure, homotetramer. Requires Zn(2+) as cofactor.

It carries out the reaction AMP + H2O + H(+) = IMP + NH4(+). The protein operates within purine metabolism; IMP biosynthesis via salvage pathway; IMP from AMP: step 1/1. Functionally, AMP deaminase plays a critical role in energy metabolism. This is AMP deaminase 3 from Homo sapiens (Human).